Here is a 400-residue protein sequence, read N- to C-terminus: MIIKPKTRGFICTTTHPVGCEANVLEQINITKAKGPVANGPKKVLVIGSSSGYGLSSRIAAAFGSGAATLGVFFEKPGTETKPGTAGWYNSAAFDKFAKQGGLYSKSLNCDAFSHEAKQKAIELIKQDLGQVDMVVYSLASPVRKLPDSGELIRSSLKPIGETYKSTAVDTNKDLIIETSVEPATEQEIEDTVTVMGGQDWELWINALAEAGVLTPDCKTVAYSYIGTELTWPIYWHGALGKAKMDLDRAAHALNDKLSATGGSANVAVLKSVVTQASSAIPVMPLYIAMVFKKMREEGLHEGCQEQINRMFHERLYRADGAAPAVDDANRLRLDDWELRDEIQQHCRDLWPTITTENLSELTDYREYKEEFLKLFGFGIESVDYDADVNPEVNFDVEQF.

NAD(+) contacts are provided by residues 48 to 53 (GSSSGY), 74 to 75 (FE), 111 to 112 (DA), and 139 to 140 (LA). Y225 serves as a coordination point for substrate. Y235 acts as the Proton donor in catalysis. NAD(+) contacts are provided by residues K244 and 273–275 (VVT).

It belongs to the TER reductase family. As to quaternary structure, monomer.

The enzyme catalyses a 2,3-saturated acyl-[ACP] + NAD(+) = a (2E)-enoyl-[ACP] + NADH + H(+). The protein operates within lipid metabolism; fatty acid biosynthesis. Involved in the final reduction of the elongation cycle of fatty acid synthesis (FAS II). Catalyzes the reduction of a carbon-carbon double bond in an enoyl moiety that is covalently linked to an acyl carrier protein (ACP). The chain is Enoyl-[acyl-carrier-protein] reductase [NADH] from Shewanella loihica (strain ATCC BAA-1088 / PV-4).